Reading from the N-terminus, the 489-residue chain is MRRFSAAAGARQQQQQGEAVSDRVLRFRGVLVVVLAPVLLISLVLLLMPRAPASATVEGSAGELVAAAGRRWGPRAVSGLGDGSTRYAVIFDAGSSGSRVHVYCFDGNLDLLPIGKEIELFKQKKPGLSAYAMDPQEAAKSLVSLLEEAEKVIPVELREQTPVRVGATAGLRALGTEKSEEILQAVRDLLQDKSSFRSQPEWVTVLDGSQEGAFQWVTINYLLGNLGKPYSHTVGVVDLGGGSVQMAYAISEKDAGKAPPVAEGEDSYVKELLLKGTTYYLYVHSYLRYGLLAARAEILKAGEGNDYRNCMLEGHHGQYRYGDDIFEASGLSSGASYSKCRAVAVRALKVDEPACTHMKCTFGGVWNGGGGDGQKNLFVASFFFDRAAEAGFVNPKAPFAKVKPSDFEEAARRVCKLNVKDAQATYPDVSEENVPYLCMDLVYQYTLLVDGFGVDPYQDITLVKKVPYSNSFVEAAWPLGSAIEVASSS.

The Cytoplasmic segment spans residues Met1 to Arg28. The helical; Signal-anchor for type II membrane protein transmembrane segment at Gly29–Pro49 threads the bilayer. Residues Arg50 to Ser489 lie on the Extracellular side of the membrane. Val89–Arg99 is an ATP binding site. Catalysis depends on Glu211, which acts as the Proton acceptor. Gly235–Gln245 serves as a coordination point for ATP.

Belongs to the GDA1/CD39 NTPase family. Ca(2+) is required as a cofactor.

The protein resides in the membrane. It carries out the reaction a ribonucleoside 5'-triphosphate + 2 H2O = a ribonucleoside 5'-phosphate + 2 phosphate + 2 H(+). Functionally, catalyzes the hydrolysis of phosphoanhydride bonds of nucleoside tri- and di-phosphates. The protein is Probable apyrase 1 (APY1) of Oryza sativa subsp. japonica (Rice).